A 1199-amino-acid chain; its full sequence is Chromatin structure-remodeling complex subunit snf21 (1199 aa).

The HSA domain occupies 256–328; sequence QRSDRERRLK…AKQRLQALKE (73 aa). The Helicase ATP-binding domain occupies 429-594; that stretch reads ISLYNNHLNG…WALLNFVLPR (166 aa). Residue 442–449 coordinates ATP; that stretch reads DEMGLGKT. Residues 544–547 carry the DEGH box motif; that stretch reads DEGH. In terms of domain architecture, Helicase C-terminal spans 740 to 903; it reads LLDRILPKLF…STPEEREAFL (164 aa). The interval 1017–1059 is disordered; the sequence is MESEARPTRGRPKRNIASVDETPALTLNGKPKKKRGPAPDTLT. The Bromo domain maps to 1061–1171; sequence EHRSLLRRVC…TAMETKIEEL (111 aa).

The protein belongs to the SNF2/RAD54 helicase family. As to quaternary structure, component of the RSC complex composed of at least arp9, arp42, rsc1, rsc4, rsc7, rsc9, rsc58, sfh1, snf21, ssr1, ssr2, ssr3 and ssr4. The complex interacts with histone and histone variant components of centromeric chromatin.

The protein localises to the nucleus. Helicase. Component of the chromatin structure remodeling complex (RSC), which is involved in transcription regulation and nucleosome positioning. Controls particularly membrane and organelle development genes. This is Chromatin structure-remodeling complex subunit snf21 (snf21) from Schizosaccharomyces pombe (strain 972 / ATCC 24843) (Fission yeast).